Reading from the N-terminus, the 240-residue chain is Uridylate kinase (240 aa).

12–15 (KLSG) lines the ATP pocket. The involved in allosteric activation by GTP stretch occupies residues 20-25 (GEDGFG). Position 54 (Gly54) interacts with UMP. The ATP site is built by Gly55 and Arg59. UMP contacts are provided by residues Asp74 and 135–142 (TGNPYFST). ATP is bound by residues Asn163, Tyr169, and Asp172.

Belongs to the UMP kinase family. In terms of assembly, homohexamer.

It is found in the cytoplasm. The enzyme catalyses UMP + ATP = UDP + ADP. It functions in the pathway pyrimidine metabolism; CTP biosynthesis via de novo pathway; UDP from UMP (UMPK route): step 1/1. Its activity is regulated as follows. Allosterically activated by GTP. Probably inhibited by UTP. In terms of biological role, catalyzes the reversible phosphorylation of UMP to UDP. In Enterococcus faecalis (strain ATCC 700802 / V583), this protein is Uridylate kinase (pyrH).